Consider the following 573-residue polypeptide: Isocitrate dehydrogenase kinase/phosphatase (573 aa).

ATP contacts are provided by residues 317–323 (APGVRGM) and Lys338. Asp373 is an active-site residue.

Belongs to the AceK family.

Its subcellular location is the cytoplasm. It catalyses the reaction L-seryl-[isocitrate dehydrogenase] + ATP = O-phospho-L-seryl-[isocitrate dehydrogenase] + ADP + H(+). In terms of biological role, bifunctional enzyme which can phosphorylate or dephosphorylate isocitrate dehydrogenase (IDH) on a specific serine residue. This is a regulatory mechanism which enables bacteria to bypass the Krebs cycle via the glyoxylate shunt in response to the source of carbon. When bacteria are grown on glucose, IDH is fully active and unphosphorylated, but when grown on acetate or ethanol, the activity of IDH declines drastically concomitant with its phosphorylation. This is Isocitrate dehydrogenase kinase/phosphatase from Pseudomonas fluorescens (strain Pf0-1).